The sequence spans 151 residues: Large ribosomal subunit protein bL9 (151 aa).

The protein belongs to the bacterial ribosomal protein bL9 family.

Binds to the 23S rRNA. In Chlorobium limicola (strain DSM 245 / NBRC 103803 / 6330), this protein is Large ribosomal subunit protein bL9.